A 354-amino-acid chain; its full sequence is MHHPLPPDDTLYDQVRPILWTGYFLKLLDQRKLPFVVEYVECHSSEDVTQAIRTLIVRGAPAIGIVAGWGAVLAAREIEAVDGIEALRKLEPALQRLHAARPTAVNLAWVLARMRRTLSAAHADWRQVMECEAESIAREDITANRCMGAYGAALIPIGSGVLTHCNTGSLATAGFGTALGVIRAGIAQGRIARVFAGETRPWLQGARLTVWELQQDGIDATLIADSAAAHLMKSGQVQWVIVGADRICANGDTANKIGTYQLAITARHHGVKFMVVASAATVDMDTTAGEAIEIEQRDPEELLGVSGVRTVAEGIAAWNPVFDVTPGALIDAIVTERGVIQSPDAAQMRATFSN.

Substrate-binding positions include 58-60 (RGA), Arg-101, and Gln-204. Residue Asp-245 is the Proton donor of the active site. Residue 255–256 (NK) participates in substrate binding.

The protein belongs to the eIF-2B alpha/beta/delta subunits family. MtnA subfamily.

It carries out the reaction 5-(methylsulfanyl)-alpha-D-ribose 1-phosphate = 5-(methylsulfanyl)-D-ribulose 1-phosphate. Its pathway is amino-acid biosynthesis; L-methionine biosynthesis via salvage pathway; L-methionine from S-methyl-5-thio-alpha-D-ribose 1-phosphate: step 1/6. Catalyzes the interconversion of methylthioribose-1-phosphate (MTR-1-P) into methylthioribulose-1-phosphate (MTRu-1-P). In Xylella fastidiosa (strain M12), this protein is Methylthioribose-1-phosphate isomerase.